The primary structure comprises 212 residues: Imidazole glycerol phosphate synthase subunit HisH (212 aa).

The region spanning 1–211 (MIGVIDYGMG…TKMAAEQQVK (211 aa)) is the Glutamine amidotransferase type-1 domain. Cysteine 79 serves as the catalytic Nucleophile. Active-site residues include histidine 186 and glutamate 188.

In terms of assembly, heterodimer of HisH and HisF.

It localises to the cytoplasm. The enzyme catalyses 5-[(5-phospho-1-deoxy-D-ribulos-1-ylimino)methylamino]-1-(5-phospho-beta-D-ribosyl)imidazole-4-carboxamide + L-glutamine = D-erythro-1-(imidazol-4-yl)glycerol 3-phosphate + 5-amino-1-(5-phospho-beta-D-ribosyl)imidazole-4-carboxamide + L-glutamate + H(+). It catalyses the reaction L-glutamine + H2O = L-glutamate + NH4(+). Its pathway is amino-acid biosynthesis; L-histidine biosynthesis; L-histidine from 5-phospho-alpha-D-ribose 1-diphosphate: step 5/9. Its function is as follows. IGPS catalyzes the conversion of PRFAR and glutamine to IGP, AICAR and glutamate. The HisH subunit catalyzes the hydrolysis of glutamine to glutamate and ammonia as part of the synthesis of IGP and AICAR. The resulting ammonia molecule is channeled to the active site of HisF. The sequence is that of Imidazole glycerol phosphate synthase subunit HisH from Bacillus velezensis (strain DSM 23117 / BGSC 10A6 / LMG 26770 / FZB42) (Bacillus amyloliquefaciens subsp. plantarum).